The following is a 209-amino-acid chain: Uracil phosphoribosyltransferase (209 aa).

5-phospho-alpha-D-ribose 1-diphosphate contacts are provided by residues arginine 78, arginine 103, and aspartate 130 to serine 138. Uracil contacts are provided by residues isoleucine 193 and glycine 198–alanine 200. Residue aspartate 199 coordinates 5-phospho-alpha-D-ribose 1-diphosphate.

It belongs to the UPRTase family. Mg(2+) is required as a cofactor.

It catalyses the reaction UMP + diphosphate = 5-phospho-alpha-D-ribose 1-diphosphate + uracil. It participates in pyrimidine metabolism; UMP biosynthesis via salvage pathway; UMP from uracil: step 1/1. Allosterically activated by GTP. Its function is as follows. Catalyzes the conversion of uracil and 5-phospho-alpha-D-ribose 1-diphosphate (PRPP) to UMP and diphosphate. The polypeptide is Uracil phosphoribosyltransferase (Methylibium petroleiphilum (strain ATCC BAA-1232 / LMG 22953 / PM1)).